Reading from the N-terminus, the 392-residue chain is Nuclear speckle splicing regulatory protein 1 homolog (392 aa).

Disordered stretches follow at residues 1–73 (MASK…IFDY), 113–169 (RQLE…AFND), and 187–357 (LLND…ARLD). Basic and acidic residues-rich tracts occupy residues 54–65 (KAAEREHQKAEA), 113–132 (RQLE…REKE), 149–160 (KQQEEVKKHREQ), 205–238 (QKNV…KSIY), and 313–357 (KSIE…ARLD). Residues 76–132 (NYDEIQAIKNEKKEEARKADKNRESKYAENIIKAHARRQLEQFSREERQQLREREKE) adopt a coiled-coil conformation.

Belongs to the NSRP1 family. Expressed in the intestine, nervous system and head neurons in both larvae and adults. Expressed in the distal tip cell.

It localises to the cytoplasm. It is found in the nucleus. In terms of biological role, required for the cessation of distal tip cell migration at the end of larval morphogenesis. The protein is Nuclear speckle splicing regulatory protein 1 homolog (ccdc-55) of Caenorhabditis elegans.